The primary structure comprises 190 residues: dCTP deaminase (190 aa).

DCTP is bound by residues 111 to 116 (KSTYAR), 135 to 137 (TLE), Gln-156, Tyr-172, and Gln-182. The active-site Proton donor/acceptor is Glu-137.

It belongs to the dCTP deaminase family. In terms of assembly, homotrimer.

It carries out the reaction dCTP + H2O + H(+) = dUTP + NH4(+). The protein operates within pyrimidine metabolism; dUMP biosynthesis; dUMP from dCTP (dUTP route): step 1/2. In terms of biological role, catalyzes the deamination of dCTP to dUTP. The protein is dCTP deaminase of Stenotrophomonas maltophilia (strain R551-3).